The chain runs to 561 residues: BTB/POZ domain-containing protein At2g46260 (561 aa).

2 disordered regions span residues 1–31 and 100–119; these read MRGSNNTDLFDPKTEMDSNFSRHGSSSEGDF and LTDNNQPDMDDAPGGDNLDD. Over residues 17 to 28 the composition is skewed to polar residues; the sequence is DSNFSRHGSSSE. The span at 107–119 shows a compositional bias: acidic residues; it reads DMDDAPGGDNLDD. Residues 143–212 enclose the BTB domain; sequence IDCSTVVRVK…MYSNSLSVTT (70 aa). The 93-residue stretch at 266-358 folds into the BACK domain; sequence QPLTDAAKQF…YMTCRKLKKV (93 aa).

It participates in protein modification; protein ubiquitination. May act as a substrate-specific adapter of an E3 ubiquitin-protein ligase complex (CUL3-RBX1-BTB) which mediates the ubiquitination and subsequent proteasomal degradation of target proteins. This Arabidopsis thaliana (Mouse-ear cress) protein is BTB/POZ domain-containing protein At2g46260.